The primary structure comprises 145 residues: SsrA-binding protein (145 aa).

This sequence belongs to the SmpB family.

The protein localises to the cytoplasm. Its function is as follows. Required for rescue of stalled ribosomes mediated by trans-translation. Binds to transfer-messenger RNA (tmRNA), required for stable association of tmRNA with ribosomes. tmRNA and SmpB together mimic tRNA shape, replacing the anticodon stem-loop with SmpB. tmRNA is encoded by the ssrA gene; the 2 termini fold to resemble tRNA(Ala) and it encodes a 'tag peptide', a short internal open reading frame. During trans-translation Ala-aminoacylated tmRNA acts like a tRNA, entering the A-site of stalled ribosomes, displacing the stalled mRNA. The ribosome then switches to translate the ORF on the tmRNA; the nascent peptide is terminated with the 'tag peptide' encoded by the tmRNA and targeted for degradation. The ribosome is freed to recommence translation, which seems to be the essential function of trans-translation. In Mesomycoplasma hyopneumoniae (strain 232) (Mycoplasma hyopneumoniae), this protein is SsrA-binding protein.